The chain runs to 502 residues: Premnaspirodiene oxygenase (502 aa).

A helical membrane pass occupies residues 2–22 (QFFSLVSIFLFLSFLFLLRKW). Cysteine 440 contributes to the heme binding site.

It belongs to the cytochrome P450 family. Heme is required as a cofactor.

It is found in the membrane. It catalyses the reaction (-)-vetispiradiene + 2 reduced [NADPH--hemoprotein reductase] + 2 O2 = solavetivone + 2 oxidized [NADPH--hemoprotein reductase] + 3 H2O + 2 H(+). Its function is as follows. Involved in the biosynthesis of solavetivone, a potent antifungal phytoalexin. Catalyzes the successive and independent hydroxylations of premnaspirodiene and solavetivol. The first hydroxylation step is 3-fold more efficient than the second hydroxylation reaction. This Hyoscyamus muticus (Egyptian henbane) protein is Premnaspirodiene oxygenase (CYP71D55).